The following is a 486-amino-acid chain: MIRNSLTDVFFAKDDVENLHEGVLRVLSKVGVKIENDEALGIFEQHGARVENGTVYIGEVLLNKALQTVPANFELQGFDRTVQVGLDHDPVVIPTNGTPMVLNFDGSYSDTNTDDLVNFYKLIDTSDVMQVTSEIAVDVPGLDKTKDSLLAQTALLMKYSHKPIYNILGATIHNYKKGSVAQGVRENIQFAKKYYGYDDKYVIYSGTCVISPLGVGWEAMDHFMGFIKENQPISITACSMTNLTAPGSLYGSVVEDAAAILSIVVLSQLMNPGLPVLYTSLSSMSDMRYVQLCMGAPEFALITLGHIALANFYKIPVRVGGALGDAFKADYQAGVESFVGLMAPMLSQSAMIPHGCGTMGSFNLTSYEKFIMDEETIRYLMRLRRGFEVSDKRKEKALKDITKVGPRGNFLGGRTPKEYREDNYLASEVFNRKGCKENTREEQGDIRDRARKVYDARMEAYELPDTTLEQKKLLNTELPEQYKFDI.

The protein belongs to the trimethylamine methyltransferase family. The L-carnitine:THF methyl transfer system is composed of two methyltransferases, MtcB and MtqA, and the corrinoid protein MtqC.

It carries out the reaction Co(I)-[quaternary-amine-specific corrinoid protein] + (R)-carnitine + H(+) = (3R)-4-(dimethylamino)-3-hydroxybutanoate + methyl-Co(III)-[quaternary-amine-specific corrinoid protein]. Its function is as follows. Involved in the degradation of the quaternary amine L-carnitine. Component of a corrinoid-dependent methyltransferase system that transfers a methyl group from L-carnitine to tetrahydrofolate (THF), forming methyl-THF, a key intermediate in the Wood-Ljungdahl acetogenesis pathway. MtcB catalyzes the methylation of the corrinoid protein MtqC, using L-carnitine as the methyl donor. L-carnitine demethylation generates the unusual biological product norcarnitine, which is likely degraded by other members of the gut microbiota. In vitro, can methylate free cob(I)alamin. The protein is L-carnitine:corrinoid methyltransferase of Eubacterium limosum.